We begin with the raw amino-acid sequence, 363 residues long: G-protein coupled receptor 78 (363 aa).

The Extracellular segment spans residues 1-7 (MGPGEAL). A helical membrane pass occupies residues 8–28 (LAGLLVMVLAVALLSNALVLL). Topologically, residues 29–47 (CCAYSAELRTRASGVLLVN) are cytoplasmic. Residues 48 to 68 (LSLGHLLLAALDMPFTLLGVM) form a helical membrane-spanning segment. Residues 69-80 (RGRTPSAPGACQ) are Extracellular-facing. A disulfide bridge links Cys-79 with Cys-156. A helical membrane pass occupies residues 81–101 (VIGFLDTFLASNAALSVAALS). Topologically, residues 102 to 122 (ADQWLAVGFPLRYAGRLRPRY) are cytoplasmic. The chain crosses the membrane as a helical span at residues 123–143 (AGLLLGCAWGQSLAFSGAALG). At 144–168 (CSWLGYSSAFASCSLRLPPEPERPR) the chain is on the extracellular side. The chain crosses the membrane as a helical span at residues 169–189 (FAAFTATLHAVGFVLPLAVLC). Residues 190-242 (LTSLQVHRVARRHCQRMDTVTMKALALLADLHPSVRQRCLIQQKRRRHRATRK) are Cytoplasmic-facing. A helical transmembrane segment spans residues 243 to 263 (IGIAIATFLICFAPYVMTRLA). Topologically, residues 264 to 277 (ELVPFVTVNAQWGI) are extracellular. A helical transmembrane segment spans residues 278–297 (LSKCLTYSKAVADPFTYSLL). At 298–363 (RRPFRQVLAG…ENDSCLQQTH (66 aa)) the chain is on the cytoplasmic side. The interval 340–363 (TPRPASTHNGSVDTENDSCLQQTH) is disordered. A compositionally biased stretch (polar residues) spans 343-363 (PASTHNGSVDTENDSCLQQTH).

It belongs to the G-protein coupled receptor 1 family. As to expression, high level of expression in placenta. Expressed throughout the brain at low level. No expression detected in skeletal muscle, lung, heart, liver, pancreas, or kidney.

It localises to the cell membrane. In terms of biological role, orphan receptor. Displays a significant level of constitutive activity. Its effect is mediated by G(s)-alpha protein that stimulate adenylate cyclase, resulting in an elevation of intracellular cAMP. The protein is G-protein coupled receptor 78 (GPR78) of Homo sapiens (Human).